We begin with the raw amino-acid sequence, 308 residues long: Methionyl-tRNA formyltransferase (308 aa).

111–114 serves as a coordination point for (6S)-5,6,7,8-tetrahydrofolate; sequence SLLP.

This sequence belongs to the Fmt family.

It carries out the reaction L-methionyl-tRNA(fMet) + (6R)-10-formyltetrahydrofolate = N-formyl-L-methionyl-tRNA(fMet) + (6S)-5,6,7,8-tetrahydrofolate + H(+). Attaches a formyl group to the free amino group of methionyl-tRNA(fMet). The formyl group appears to play a dual role in the initiator identity of N-formylmethionyl-tRNA by promoting its recognition by IF2 and preventing the misappropriation of this tRNA by the elongation apparatus. This is Methionyl-tRNA formyltransferase from Thermodesulfovibrio yellowstonii (strain ATCC 51303 / DSM 11347 / YP87).